A 142-amino-acid polypeptide reads, in one-letter code: Large ribosomal subunit protein uL11 (142 aa).

Belongs to the universal ribosomal protein uL11 family. As to quaternary structure, part of the ribosomal stalk of the 50S ribosomal subunit. Interacts with L10 and the large rRNA to form the base of the stalk. L10 forms an elongated spine to which L12 dimers bind in a sequential fashion forming a multimeric L10(L12)X complex. In terms of processing, one or more lysine residues are methylated.

Functionally, forms part of the ribosomal stalk which helps the ribosome interact with GTP-bound translation factors. The sequence is that of Large ribosomal subunit protein uL11 from Mycobacterium leprae (strain Br4923).